The chain runs to 357 residues: Quinolinate synthase (357 aa).

Residues His-50 and Ser-71 each coordinate iminosuccinate. Cys-116 is a binding site for [4Fe-4S] cluster. Iminosuccinate-binding positions include 142–144 (YAN) and Ser-159. Cys-203 is a [4Fe-4S] cluster binding site. Iminosuccinate contacts are provided by residues 229–231 (HPE) and Thr-246. Cys-300 contributes to the [4Fe-4S] cluster binding site.

The protein belongs to the quinolinate synthase family. Type 1 subfamily. [4Fe-4S] cluster serves as cofactor.

It localises to the cytoplasm. It carries out the reaction iminosuccinate + dihydroxyacetone phosphate = quinolinate + phosphate + 2 H2O + H(+). Its pathway is cofactor biosynthesis; NAD(+) biosynthesis; quinolinate from iminoaspartate: step 1/1. Catalyzes the condensation of iminoaspartate with dihydroxyacetone phosphate to form quinolinate. The protein is Quinolinate synthase of Shewanella sp. (strain ANA-3).